The chain runs to 643 residues: Protein RTF1 homolog (643 aa).

Disordered regions lie at residues 1 to 107 (MGDL…YKNE) and 124 to 262 (ILSE…SDVP). Gly2 bears the N-acetylglycine mark. Positions 65-77 (KRLEAEREDRAAR) are enriched in basic and acidic residues. Residue Ser87 is modified to Phosphoserine. A compositionally biased stretch (basic and acidic residues) spans 124-157 (ILSERADKKGDKNFTEKLRSKRESEKTPVSKKET). The segment covering 162-171 (ASRGVRSSAR) has biased composition (low complexity). Basic and acidic residues predominate over residues 172–188 (SADRAAAKDDALNELRA). Residues 225–235 (SSNLSSSSQSD) are compositionally biased toward low complexity. Positions 261-396 (VPTFEDVKEV…KKEAIQRTNS (136 aa)) constitute a Plus3 domain.

In terms of assembly, component of the nuclear PAF1 complex (PAF1C), which consists of VIP2/ELF7/PAF1, VIP3/SKI8/WDR61, VIP4/LEO1, VIP5/RTF1, VIP6/ELF8/CTR9 and CDC73.

The protein localises to the nucleus. Component of the PAF1 complex (PAF1C) which is involved in histone modifications such as methylation on histone H3 'Lys-4' (H3K4me3). Involved in regulation of flowering time. Required for the expression of the flowering repressors and FLC and MADS-box genes of the MAF family. Involved in the control of seed dormancy and germination. The chain is Protein RTF1 homolog from Arabidopsis thaliana (Mouse-ear cress).